A 70-amino-acid polypeptide reads, in one-letter code: MNNSMINPSIVDLLKRVEDRYSLVILSAKRARQIIDGAETFVDVESNKPLTIAINEIDEGFVNYKDTEEK.

The protein belongs to the RNA polymerase subunit omega family. In terms of assembly, the RNAP catalytic core consists of 2 alpha, 1 beta, 1 beta' and 1 omega subunit. When a sigma factor is associated with the core the holoenzyme is formed, which can initiate transcription.

The enzyme catalyses RNA(n) + a ribonucleoside 5'-triphosphate = RNA(n+1) + diphosphate. Its function is as follows. Promotes RNA polymerase assembly. Latches the N- and C-terminal regions of the beta' subunit thereby facilitating its interaction with the beta and alpha subunits. This Clostridium perfringens (strain ATCC 13124 / DSM 756 / JCM 1290 / NCIMB 6125 / NCTC 8237 / Type A) protein is DNA-directed RNA polymerase subunit omega.